The chain runs to 224 residues: Glycerol-3-phosphate acyltransferase (224 aa).

A run of 5 helical transmembrane segments spans residues 14 to 34 (FFPLAATLLGYLIGSLSFAVI), 64 to 84 (TAAIVTLLLDAAKGWLPVMLV), 98 to 118 (MALVGLAAFIGHLYPVFFNFA), 127 to 147 (LGVLLGLSPILALATGATWLI), and 160 to 180 (LTAAVFVPVYYVFGDGMAWYL).

This sequence belongs to the PlsY family. In terms of assembly, probably interacts with PlsX.

It is found in the cell inner membrane. The enzyme catalyses an acyl phosphate + sn-glycerol 3-phosphate = a 1-acyl-sn-glycero-3-phosphate + phosphate. It functions in the pathway lipid metabolism; phospholipid metabolism. Functionally, catalyzes the transfer of an acyl group from acyl-phosphate (acyl-PO(4)) to glycerol-3-phosphate (G3P) to form lysophosphatidic acid (LPA). This enzyme utilizes acyl-phosphate as fatty acyl donor, but not acyl-CoA or acyl-ACP. This Albidiferax ferrireducens (strain ATCC BAA-621 / DSM 15236 / T118) (Rhodoferax ferrireducens) protein is Glycerol-3-phosphate acyltransferase.